Reading from the N-terminus, the 293-residue chain is Notch homolog 2 N-terminal-like protein C (293 aa).

EGF-like domains follow at residues 42-81 (PPRM…EYCQ), 82-120 (HRDP…EDCQ), 123-161 (TSHP…KECQ), and 162-198 (WTDA…QKCE). 17 cysteine pairs are disulfide-bonded: Cys-46–Cys-59, Cys-53–Cys-69, Cys-71–Cys-80, Cys-86–Cys-97, Cys-91–Cys-108, Cys-110–Cys-119, Cys-127–Cys-139, Cys-133–Cys-149, Cys-151–Cys-160, Cys-166–Cys-177, Cys-171–Cys-186, Cys-188–Cys-197, Cys-204–Cys-216, Cys-210–Cys-225, Cys-227–Cys-236, Cys-243–Cys-254, and Cys-248–Cys-264. Asn-64 carries an N-linked (GlcNAc...) asparagine glycan. Asn-173 carries N-linked (GlcNAc...) asparagine glycosylation. In terms of domain architecture, EGF-like 5; calcium-binding spans 200 to 237 (DVNECDIPGHCQHGGTCLNLPGSYQCQCLQGFTGQYCD). Residues 239-276 (LYVPCAPSPCVNGGTCRQTGDFTFECNCLPETVRRGTE) form the EGF-like 6 domain.

The protein belongs to the NOTCH family. As to quaternary structure, interacts with NOTCH2. Interacts with DLL1; the interaction is direct. As to expression, expressed in radial glia neural stem cells during cortical development.

Its subcellular location is the secreted. Functionally, human-specific protein that promotes neural progenitor proliferation and evolutionary expansion of the brain neocortex by regulating the Notch signaling pathway. Able to promote neural progenitor self-renewal, possibly by down-regulating neuronal differentiation genes, thereby delaying the differentiation of neuronal progenitors and leading to an overall final increase in neuronal production. Acts by enhancing the Notch signaling pathway via two different mechanisms that probably work in parallel to reach the same effect. Enhances Notch signaling pathway in a non-cell-autonomous manner via direct interaction with NOTCH2. Also promotes Notch signaling pathway in a cell-autonomous manner through inhibition of cis DLL1-NOTCH2 interactions, which promotes neuronal differentiation. This is Notch homolog 2 N-terminal-like protein C from Homo sapiens (Human).